Reading from the N-terminus, the 257-residue chain is 4-diphosphocytidyl-2-C-methyl-D-erythritol kinase (257 aa).

Lys-8 is a catalytic residue. 91–101 (PMGGGLGGGSA) is a binding site for ATP. Asp-131 is a catalytic residue.

This sequence belongs to the GHMP kinase family. IspE subfamily.

The enzyme catalyses 4-CDP-2-C-methyl-D-erythritol + ATP = 4-CDP-2-C-methyl-D-erythritol 2-phosphate + ADP + H(+). Its pathway is isoprenoid biosynthesis; isopentenyl diphosphate biosynthesis via DXP pathway; isopentenyl diphosphate from 1-deoxy-D-xylulose 5-phosphate: step 3/6. Functionally, catalyzes the phosphorylation of the position 2 hydroxy group of 4-diphosphocytidyl-2C-methyl-D-erythritol. The sequence is that of 4-diphosphocytidyl-2-C-methyl-D-erythritol kinase from Petrotoga mobilis (strain DSM 10674 / SJ95).